Consider the following 314-residue polypeptide: Solute carrier family 25 member 33 (314 aa).

3 Solcar repeats span residues 4–111 (KDTL…SKET), 119–206 (NSGV…LKKY), and 224–308 (SDFL…IVHL). 6 consecutive transmembrane segments (helical) span residues 7-27 (LLHL…TCPL), 44-58 (VFQV…AGVI), 114-134 (GIFV…AAFI), 183-203 (LTAS…YETL), 226-246 (FLGL…IAYP), and 291-311 (QIPN…LLAE).

The protein belongs to the mitochondrial carrier (TC 2.A.29) family.

It localises to the mitochondrion inner membrane. Functionally, mitochondrial transporter that imports/exports pyrimidine nucleotides into and from mitochondria which participates in dendritic cell endocytosis. In Danio rerio (Zebrafish), this protein is Solute carrier family 25 member 33 (slc25a33).